Reading from the N-terminus, the 770-residue chain is Glutamate carboxypeptidase 2 homolog (770 aa).

The Cytoplasmic segment spans residues 1-19 (MPYVGVGAQKASTNLTGGP). A helical; Signal-anchor for type II membrane protein transmembrane segment spans residues 20–40 (MMKAYAFVLAFFLLGLGVLAL). Topologically, residues 41 to 770 (GKHHSGRRFN…CVVNTLRDVI (730 aa)) are extracellular. Asparagine 175 and asparagine 337 each carry an N-linked (GlcNAc...) asparagine glycan. The interval 282-597 (SKKELFKGRT…QYWAELAKTF (316 aa)) is catalytic. Histidine 387 and aspartate 397 together coordinate Zn(2+). The N-linked (GlcNAc...) asparagine glycan is linked to asparagine 417. Glutamate 435 (nucleophile) is an active-site residue. The Zn(2+) site is built by glutamate 436 and aspartate 464. Asparagine 469 and asparagine 551 each carry an N-linked (GlcNAc...) asparagine glycan. Position 562 (histidine 562) interacts with Zn(2+). N-linked (GlcNAc...) asparagine glycans are attached at residues asparagine 606 and asparagine 630.

The protein belongs to the peptidase M28 family. M28B subfamily. It depends on Zn(2+) as a cofactor.

It localises to the membrane. It catalyses the reaction Release of an unsubstituted, C-terminal glutamyl residue, typically from Ac-Asp-Glu or folylpoly-gamma-glutamates.. The chain is Glutamate carboxypeptidase 2 homolog from Caenorhabditis briggsae.